The sequence spans 240 residues: Competence protein ComFC (240 aa).

Belongs to the ComF/GntX family. Monomer and dimer in solution. Interacts with ComFA and DprA; ComFA-ComFC form rings about 150 Angstroms in diameter with apparent 6-fold symmetry.

In terms of biological role, involved in transformation (genetic competence for DNA uptake). In Bacillus subtilis (strain 168), this protein is Competence protein ComFC (comFC).